A 373-amino-acid polypeptide reads, in one-letter code: Lipoyl amidotransferase LIPT1, mitochondrial (373 aa).

The N-terminal 25 residues, 1-25, are a transit peptide targeting the mitochondrion; it reads MLIPFSMKNCFQLLCNCQVPAAGFK. One can recognise a BPL/LPL catalytic domain in the interval 57–243; that stretch reads LEGKPILFFW…EYAAYHQIDN (187 aa). The (R)-lipoyl-5'-AMP site is built by tyrosine 107, arginine 151, lysine 161, and threonine 179.

The protein belongs to the LplA family. Highly expressed in skeletal muscle and heart, moderately in kidney and pancreas, and detected at lower levels in liver, brain, placenta and lung.

Its subcellular location is the mitochondrion. It carries out the reaction N(6)-[(R)-lipoyl]-L-lysyl-[glycine-cleavage complex H protein] + L-lysyl-[lipoyl-carrier protein] = L-lysyl-[glycine-cleavage complex H protein] + N(6)-[(R)-lipoyl]-L-lysyl-[lipoyl-carrier protein]. It catalyses the reaction (R)-lipoyl-5'-AMP + L-lysyl-[lipoyl-carrier protein] = N(6)-[(R)-lipoyl]-L-lysyl-[lipoyl-carrier protein] + AMP + 2 H(+). It functions in the pathway protein modification; protein lipoylation via exogenous pathway; protein N(6)-(lipoyl)lysine from lipoate: step 2/2. Lipoyl amidotransferase that catalyzes the transfer of lipoyl moieties from lipoyl-protein H of the glycine cleavage system (lipoyl-GCSH) to E2 subunits of the pyruvate dehydrogenase complex (PDCE2). Unable to catalyze the transfer of octanoyl from octanoyl-GCSH to PDCE2. In vitro, it is also able to catalyze the transfer of the lipoyl group from lipoyl-AMP to the specific lysine residue of lipoyl domains of lipoate-dependent enzymes but this reaction may not be physiologically relevant. This is Lipoyl amidotransferase LIPT1, mitochondrial from Homo sapiens (Human).